The chain runs to 368 residues: MSETQEFWLISAPNLPGADIFDQVNQKTAKENSLSENKKFNTPALRVGTLNSLITLNDELQKIDTIVESTTKKIARQLVDLVGTKPGKDKSLSINGHTIPQYLQQFAWDDAKYNLKLSLQEIVEKISSAVSKIDDDLKIKSSEYSTLSSSVASEERKASGNLQVRTLNDLITADNIVQTDYFTTAFVVIPKQSEKEFLACYETISDFVLGRSAKRVAQDNDYFLYSVILFKKFYENFKTKIIEKKWVVRDFKLEDNKPTQERSKLTEDKKNCRTSLIRWCRLNFPEAFMAWVHLKVVRVFVESVLRFGIPFNFQAILMKPQKGADKKVRDILFDQFKYLGSAHISGKNETDDSEKFYPYISVSVNWEN.

It belongs to the V-ATPase C subunit family. As to quaternary structure, V-ATPase is a heteromultimeric enzyme composed of a peripheral catalytic V1 complex (components A to H) attached to an integral membrane V0 proton pore complex (components: a, c, c', c'' and d).

Functionally, subunit of the peripheral V1 complex of vacuolar ATPase. Subunit C is necessary for the assembly of the catalytic sector of the enzyme and is likely to have a specific function in its catalytic activity. V-ATPase is responsible for acidifying a variety of intracellular compartments in eukaryotic cells. The chain is V-type proton ATPase subunit C (vatC) from Dictyostelium discoideum (Social amoeba).